A 192-amino-acid chain; its full sequence is Holliday junction branch migration complex subunit RuvA (192 aa).

The domain I stretch occupies residues 1–64 (MIGRLTGILA…EDGHYLYGFL (64 aa)). The segment at 65-143 (TEAERFAFRQ…DATGVSLHPA (79 aa)) is domain II. The flexible linker stretch occupies residues 144 to 149 (VDDSKQ). The tract at residues 149-192 (QDISNALLALGYNEKEAASAMKQLPADVSTSDGIRAALKLLSKV) is domain III.

Belongs to the RuvA family. As to quaternary structure, homotetramer. Forms an RuvA(8)-RuvB(12)-Holliday junction (HJ) complex. HJ DNA is sandwiched between 2 RuvA tetramers; dsDNA enters through RuvA and exits via RuvB. An RuvB hexamer assembles on each DNA strand where it exits the tetramer. Each RuvB hexamer is contacted by two RuvA subunits (via domain III) on 2 adjacent RuvB subunits; this complex drives branch migration. In the full resolvosome a probable DNA-RuvA(4)-RuvB(12)-RuvC(2) complex forms which resolves the HJ.

The protein localises to the cytoplasm. The RuvA-RuvB-RuvC complex processes Holliday junction (HJ) DNA during genetic recombination and DNA repair, while the RuvA-RuvB complex plays an important role in the rescue of blocked DNA replication forks via replication fork reversal (RFR). RuvA specifically binds to HJ cruciform DNA, conferring on it an open structure. The RuvB hexamer acts as an ATP-dependent pump, pulling dsDNA into and through the RuvAB complex. HJ branch migration allows RuvC to scan DNA until it finds its consensus sequence, where it cleaves and resolves the cruciform DNA. The polypeptide is Holliday junction branch migration complex subunit RuvA (Dechloromonas aromatica (strain RCB)).